The chain runs to 739 residues: Photosystem I P700 chlorophyll a apoprotein A1 (739 aa).

Transmembrane regions (helical) follow at residues 61–84, 147–170, 186–210, 281–299, 336–359, 375–401, 423–445, and 520–538; these read IFSAHFGHLAVVFVWLSGMYFHGA, LYVTAIGGLVMAALMVFAGWFHYH, MNHHLSVLLGCGSLGWTGHLIHVSL, VAHHHLAIAVLFIIAGHMY, WHAQLAVNLALLGSLTIVIAHHMY, LSLFTHHTWIGGFLIVGAGAHGAIFMV, AIISHLNWVCIFLGFHSFGLYIH, and FMVHHIHAFTIHVTVLILL. 2 residues coordinate [4Fe-4S] cluster: Cys562 and Cys571. 2 helical membrane passes run 578–599 and 653–675; these read HVFLGLFWMYNSLSIVIFHFSW and LSAYGIMFLAGHFVFAFSLMFLF. His664 is a binding site for chlorophyll a'. The chlorophyll a site is built by Met672 and Tyr680. Trp681 serves as a coordination point for phylloquinone. A helical membrane pass occupies residues 713–733; the sequence is AVGVAHYLLGGIVTTWAFFLA.

The protein belongs to the PsaA/PsaB family. The PsaA/B heterodimer binds the P700 chlorophyll special pair and subsequent electron acceptors. PSI consists of a core antenna complex that captures photons, and an electron transfer chain that converts photonic excitation into a charge separation. The cyanobacterial PSI reaction center is composed of one copy each of PsaA,B,C,D,E,F,I,J,K,L,M and X, and forms trimeric complexes. PSI electron transfer chain: 5 chlorophyll a, 1 chlorophyll a', 2 phylloquinones and 3 4Fe-4S clusters. PSI core antenna: 90 chlorophyll a, 22 carotenoids, 3 phospholipids and 1 galactolipid. P700 is a chlorophyll a/chlorophyll a' dimer, A0 is one or more chlorophyll a, A1 is one or both phylloquinones and FX is a shared 4Fe-4S iron-sulfur center. serves as cofactor.

The protein resides in the cellular thylakoid membrane. The enzyme catalyses reduced [plastocyanin] + hnu + oxidized [2Fe-2S]-[ferredoxin] = oxidized [plastocyanin] + reduced [2Fe-2S]-[ferredoxin]. Its function is as follows. PsaA and PsaB bind P700, the primary electron donor of photosystem I (PSI), as well as the electron acceptors A0, A1 and FX. PSI is a plastocyanin/cytochrome c6-ferredoxin oxidoreductase, converting photonic excitation into a charge separation, which transfers an electron from the donor P700 chlorophyll pair to the spectroscopically characterized acceptors A0, A1, FX, FA and FB in turn. Oxidized P700 is reduced on the lumenal side of the thylakoid membrane by plastocyanin or cytochrome c6. This is Photosystem I P700 chlorophyll a apoprotein A1 from Picosynechococcus sp. (strain ATCC 27264 / PCC 7002 / PR-6) (Agmenellum quadruplicatum).